A 451-amino-acid polypeptide reads, in one-letter code: Phosphoglucosamine mutase (451 aa).

Residue S102 is the Phosphoserine intermediate of the active site. Mg(2+) is bound by residues S102, D243, D245, and D247. S102 is subject to Phosphoserine.

This sequence belongs to the phosphohexose mutase family. Mg(2+) is required as a cofactor. Post-translationally, activated by phosphorylation.

The enzyme catalyses alpha-D-glucosamine 1-phosphate = D-glucosamine 6-phosphate. In terms of biological role, catalyzes the conversion of glucosamine-6-phosphate to glucosamine-1-phosphate. This is Phosphoglucosamine mutase from Brucella canis (strain ATCC 23365 / NCTC 10854 / RM-666).